We begin with the raw amino-acid sequence, 132 residues long: D-ribose pyranase (132 aa).

His20 functions as the Proton donor in the catalytic mechanism. Residues Asp28, His99, and 121–123 (YSN) contribute to the substrate site.

This sequence belongs to the RbsD / FucU family. RbsD subfamily. In terms of assembly, homodecamer.

The protein resides in the cytoplasm. It catalyses the reaction beta-D-ribopyranose = beta-D-ribofuranose. It participates in carbohydrate metabolism; D-ribose degradation; D-ribose 5-phosphate from beta-D-ribopyranose: step 1/2. Catalyzes the interconversion of beta-pyran and beta-furan forms of D-ribose. This is D-ribose pyranase from Pseudomonas putida (strain W619).